The primary structure comprises 913 residues: Ubiquitin carboxyl-terminal hydrolase 20 (913 aa).

The UBP-type zinc-finger motif lies at 6 to 111 (DLCPHLDSIG…GSSKFSEQDS (106 aa)). The Zn(2+) site is built by Cys-8, His-10, Cys-30, Cys-33, Cys-43, Cys-48, Cys-53, His-60, His-64, His-70, Cys-83, and Cys-86. Ser-111, Ser-131, and Ser-133 each carry phosphoserine. One can recognise a USP domain in the interval 144–684 (TGMKNLGNSC…EGYVLFYRKS (541 aa)). Cys-153 acts as the Nucleophile in catalysis. The tract at residues 256–414 (LTEARDSDSS…SSSPPRASPV (159 aa)) is disordered. Position 257 is a phosphothreonine (Thr-257). A compositionally biased stretch (basic and acidic residues) spans 258 to 278 (EARDSDSSDTDEKREGDRSPS). At Ser-304 the chain carries Phosphoserine. The segment covering 315–331 (EASRAISEKERMKDRKF) has biased composition (basic and acidic residues). A Phosphoserine modification is found at Ser-367. Thr-376 is subject to Phosphothreonine. Residues Ser-407 and Ser-412 each carry the phosphoserine modification. His-642 (proton acceptor) is an active-site residue. DUSP domains lie at 686–779 (EEAV…LYVC) and 788–891 (ALAK…RQSV).

This sequence belongs to the peptidase C19 family. USP20/USP33 subfamily. Interacts with VHL, leading to its ubiquitination and subsequent degradation. Interacts with CCP110. Interacts with DIO2. Interacts with HIF1A. Interacts with ADRB2. Interacts with USP18. In terms of processing, ubiquitinated via a VHL-dependent pathway for proteasomal degradation.

It localises to the cytoplasm. Its subcellular location is the endoplasmic reticulum. The protein localises to the perinuclear region. It is found in the cytoskeleton. The protein resides in the microtubule organizing center. It localises to the centrosome. The enzyme catalyses Thiol-dependent hydrolysis of ester, thioester, amide, peptide and isopeptide bonds formed by the C-terminal Gly of ubiquitin (a 76-residue protein attached to proteins as an intracellular targeting signal).. Functionally, deubiquitinating enzyme that plays a role in many cellular processes including autophagy, cellular antiviral response or membrane protein biogenesis. Attenuates TLR4-mediated NF-kappa-B signaling by cooperating with beta-arrestin-2/ARRB2 and inhibiting TRAF6 autoubiquitination. Promotes cellular antiviral responses by deconjugating 'Lys-33' and 'Lys-48'-linked ubiquitination of STING1 leading to its stabilization. Plays an essential role in autophagy induction by regulating the ULK1 stability through deubiquitination of ULK1. Acts as a positive regulator for NF-kappa-B activation by TNF-alpha through deubiquitinating 'Lys-48'-linked polyubiquitination of SQSTM1, leading to its increased stability. Acts as a regulator of G-protein coupled receptor (GPCR) signaling by mediating the deubiquitination beta-2 adrenergic receptor (ADRB2). Plays a central role in ADRB2 recycling and resensitization after prolonged agonist stimulation by constitutively binding ADRB2, mediating deubiquitination of ADRB2 and inhibiting lysosomal trafficking of ADRB2. Upon dissociation, it is probably transferred to the translocated beta-arrestins, possibly leading to beta-arrestins deubiquitination and disengagement from ADRB2. This suggests the existence of a dynamic exchange between the ADRB2 and beta-arrestins. Deubiquitinates DIO2, thereby regulating thyroid hormone regulation. Deubiquitinates HIF1A, leading to stabilize HIF1A and enhance HIF1A-mediated activity. Deubiquitinates MCL1, a pivotal member of the anti-apoptotic Bcl-2 protein family to regulate its stability. Within the endoplasmic reticulum, participates with USP33 in the rescue of post-translationally targeted membrane proteins that are inappropriately ubiquitinated by the cytosolic protein quality control in the cytosol. This is Ubiquitin carboxyl-terminal hydrolase 20 (USP20) from Pongo abelii (Sumatran orangutan).